A 329-amino-acid polypeptide reads, in one-letter code: Beta-ketoacyl-[acyl-carrier-protein] synthase III (329 aa).

Residues Cys-112 and His-253 contribute to the active site. The segment at 254-258 is ACP-binding; the sequence is QANQR. The active site involves Asn-283.

Belongs to the thiolase-like superfamily. FabH family. As to quaternary structure, homodimer.

It is found in the cytoplasm. The catalysed reaction is malonyl-[ACP] + acetyl-CoA + H(+) = 3-oxobutanoyl-[ACP] + CO2 + CoA. It participates in lipid metabolism; fatty acid biosynthesis. In terms of biological role, catalyzes the condensation reaction of fatty acid synthesis by the addition to an acyl acceptor of two carbons from malonyl-ACP. Catalyzes the first condensation reaction which initiates fatty acid synthesis and may therefore play a role in governing the total rate of fatty acid production. Possesses both acetoacetyl-ACP synthase and acetyl transacylase activities. Its substrate specificity determines the biosynthesis of branched-chain and/or straight-chain of fatty acids. The sequence is that of Beta-ketoacyl-[acyl-carrier-protein] synthase III from Gloeobacter violaceus (strain ATCC 29082 / PCC 7421).